The chain runs to 165 residues: Ubiquitin-fold modifier-conjugating enzyme 1 (165 aa).

Cysteine 117 (glycyl thioester intermediate) is an active-site residue.

It belongs to the ubiquitin-conjugating enzyme family. UFC1 subfamily.

In terms of biological role, E2-like enzyme which forms an intermediate with UFM1 via a thioester linkage. The protein is Ubiquitin-fold modifier-conjugating enzyme 1 of Brugia malayi (Filarial nematode worm).